Consider the following 470-residue polypeptide: Velvet complex subunit B (470 aa).

Disordered regions lie at residues methionine 1–threonine 148 and valine 223–phenylalanine 321. The segment covering proline 15–glutamine 37 has biased composition (low complexity). The span at histidine 38 to threonine 49 shows a compositional bias: pro residues. Over residues histidine 74–serine 86 the composition is skewed to basic residues. Pro residues predominate over residues asparagine 102–glutamate 124. In terms of domain architecture, Velvet spans glycine 147–arginine 452. Residues glycine 232–serine 241 are compositionally biased toward low complexity. A compositionally biased stretch (polar residues) spans threonine 242 to leucine 255. A compositionally biased stretch (low complexity) spans glutamine 280–tyrosine 301. Polar residues predominate over residues glycine 307 to asparagine 318.

Belongs to the velvet family. VelB subfamily. In terms of assembly, component of the heterotrimeric velvet complex composed of laeA, veA and velB; VeA acting as a bridging protein between laeA and velB. Forms a heterodimeric complex with vosA; the formation of the velB-vosA complex is light-dependent.

It is found in the nucleus. Its subcellular location is the cytoplasm. Component of the velvet transcription factor complex that controls sexual/asexual developmental ratio in response to light, promoting sexual development in the darkness while stimulating asexual sporulation under illumination. The velvet complex acts as a global regulator for secondary metabolite gene expression. Component of the velB-VosA heterodimeric complex that plays a dual role in activating genes associated with spore maturation and repressing certain development-associated genes. The complex binds DNA through the DNA-binding domain of vosA that recognizes an 11-nucleotide consensus sequence 5'-CTGGCCGCGGC-3' consisting of two motifs in the promoters of key developmental regulatory genes. Controls the expression of the pink pigment aurofusarin and the mycotoxin deoxynivalenol gene clusters. Regulates hyphae formation, hyphal hydrophobicity and conidiation. Regulates of cell wall integrity and pathogenicity. The protein is Velvet complex subunit B of Gibberella zeae (strain ATCC MYA-4620 / CBS 123657 / FGSC 9075 / NRRL 31084 / PH-1) (Wheat head blight fungus).